The sequence spans 491 residues: uncharacterized protein (491 aa).

This is an uncharacterized protein from Schizosaccharomyces pombe (strain 972 / ATCC 24843) (Fission yeast).